Here is a 449-residue protein sequence, read N- to C-terminus: Methionine aminopeptidase 2 (449 aa).

A disordered region spans residues 1–91 (MAAQAAPELA…PRIPLTTLFP (91 aa)). Residues 34-50 (EEAENEGDSDDDRDDEQ) show a composition bias toward acidic residues. The span at 61-75 (KKKKKKRPKKKKKTA) shows a compositional bias: basic residues. Substrate is bound at residue His-199. Residues Asp-219, Asp-230, and His-299 each coordinate a divalent metal cation. His-307 is a substrate binding site. Glu-335 and Glu-430 together coordinate a divalent metal cation.

Belongs to the peptidase M24A family. Methionine aminopeptidase eukaryotic type 2 subfamily. The cofactor is Co(2+). It depends on Zn(2+) as a cofactor. Mn(2+) serves as cofactor. Requires Fe(2+) as cofactor.

Its subcellular location is the cytoplasm. The enzyme catalyses Release of N-terminal amino acids, preferentially methionine, from peptides and arylamides.. In terms of biological role, cotranslationally removes the N-terminal methionine from nascent proteins. The N-terminal methionine is often cleaved when the second residue in the primary sequence is small and uncharged (Met-Ala-, Cys, Gly, Pro, Ser, Thr, or Val). The polypeptide is Methionine aminopeptidase 2 (Arthroderma benhamiae (strain ATCC MYA-4681 / CBS 112371) (Trichophyton mentagrophytes)).